A 234-amino-acid chain; its full sequence is Small ribosomal subunit protein eS4 (234 aa).

Residues 39-102 (MPLVVVLRDL…NANYRVVIGM (64 aa)) enclose the S4 RNA-binding domain.

Belongs to the eukaryotic ribosomal protein eS4 family.

The chain is Small ribosomal subunit protein eS4 from Methanocella arvoryzae (strain DSM 22066 / NBRC 105507 / MRE50).